The chain runs to 111 residues: DNA-binding protein MTH_1615 (111 aa).

The protein belongs to the PDCD5 family.

In terms of biological role, DNA-binding protein which can interact with a randomly chosen 20-mer of double-stranded DNA. The polypeptide is DNA-binding protein MTH_1615 (Methanothermobacter thermautotrophicus (strain ATCC 29096 / DSM 1053 / JCM 10044 / NBRC 100330 / Delta H) (Methanobacterium thermoautotrophicum)).